The following is a 129-amino-acid chain: Glycine cleavage system H protein (129 aa).

The Lipoyl-binding domain maps to 23 to 104 (SVTVGITQHA…CYAAWLFKLK (82 aa)). Lys64 is subject to N6-lipoyllysine.

The protein belongs to the GcvH family. As to quaternary structure, the glycine cleavage system is composed of four proteins: P, T, L and H. (R)-lipoate serves as cofactor.

Functionally, the glycine cleavage system catalyzes the degradation of glycine. The H protein shuttles the methylamine group of glycine from the P protein to the T protein. This Nitrosomonas europaea (strain ATCC 19718 / CIP 103999 / KCTC 2705 / NBRC 14298) protein is Glycine cleavage system H protein.